A 147-amino-acid polypeptide reads, in one-letter code: Transcriptional regulator FurA (147 aa).

A DNA-binding region spans residues 1–85 (MSSIPDYAEQ…GSVARYESRV (85 aa)). Positions 34 and 82 each coordinate Zn(2+). Positions 86-147 (GDNHHHIVCR…SISDTSRSHP (62 aa)) are dimerization. Fe cation-binding residues include Asp87 and His89. Residues His91, Cys94, Cys97, and Asp102 each coordinate Zn(2+). Glu109 is a Fe cation binding site.

The protein belongs to the Fur family. Homodimer.

The protein resides in the cytoplasm. Represses transcription of the catalase-peroxidase gene katG and its own transcription by binding to the promoter region in a redox-dependent manner. The polypeptide is Transcriptional regulator FurA (furA) (Mycobacterium bovis (strain ATCC BAA-935 / AF2122/97)).